A 141-amino-acid chain; its full sequence is Small ribosomal subunit protein uS12 (141 aa).

Aspartate 102 carries the 3-methylthioaspartic acid modification. The disordered stretch occupies residues 115–141 (GDASGVEKRRQQRSLYGAKRPKKEASK).

The protein belongs to the universal ribosomal protein uS12 family. As to quaternary structure, part of the 30S ribosomal subunit. Contacts proteins S8 and S17. May interact with IF1 in the 30S initiation complex.

With S4 and S5 plays an important role in translational accuracy. Its function is as follows. Interacts with and stabilizes bases of the 16S rRNA that are involved in tRNA selection in the A site and with the mRNA backbone. Located at the interface of the 30S and 50S subunits, it traverses the body of the 30S subunit contacting proteins on the other side and probably holding the rRNA structure together. The combined cluster of proteins S8, S12 and S17 appears to hold together the shoulder and platform of the 30S subunit. The sequence is that of Small ribosomal subunit protein uS12 from Ureaplasma parvum serovar 3 (strain ATCC 27815 / 27 / NCTC 11736).